A 140-amino-acid chain; its full sequence is Large ribosomal subunit protein uL11 (140 aa).

Belongs to the universal ribosomal protein uL11 family. In terms of assembly, part of the ribosomal stalk of the 50S ribosomal subunit. Interacts with L10 and the large rRNA to form the base of the stalk. L10 forms an elongated spine to which L12 dimers bind in a sequential fashion forming a multimeric L10(L12)X complex. One or more lysine residues are methylated.

Functionally, forms part of the ribosomal stalk which helps the ribosome interact with GTP-bound translation factors. The protein is Large ribosomal subunit protein uL11 of Oleidesulfovibrio alaskensis (strain ATCC BAA-1058 / DSM 17464 / G20) (Desulfovibrio alaskensis).